We begin with the raw amino-acid sequence, 171 residues long: uncharacterized protein (171 aa).

The N-terminal stretch at 1 to 18 (MRYSKLTMLIPCALLLSA) is a signal peptide. Cys19 carries the N-palmitoyl cysteine lipid modification. Cys19 carries the S-diacylglycerol cysteine lipid modification.

It is found in the cell membrane. This is an uncharacterized protein from Escherichia coli (strain K12).